Here is a 167-residue protein sequence, read N- to C-terminus: Lipoprotein signal peptidase (167 aa).

The next 4 helical transmembrane spans lie at 5–25, 42–62, 70–90, and 102–122; these read ICST…LDLG, LIPY…SFLA, WFFA…MYRA, and ALII…GFVI. Catalysis depends on residues Asp-123 and Asp-141. Residues 137–157 traverse the membrane as a helical segment; that stretch reads FNIADMAICIGAGLVIIDSFL.

This sequence belongs to the peptidase A8 family.

The protein resides in the cell inner membrane. The catalysed reaction is Release of signal peptides from bacterial membrane prolipoproteins. Hydrolyzes -Xaa-Yaa-Zaa-|-(S,diacylglyceryl)Cys-, in which Xaa is hydrophobic (preferably Leu), and Yaa (Ala or Ser) and Zaa (Gly or Ala) have small, neutral side chains.. It participates in protein modification; lipoprotein biosynthesis (signal peptide cleavage). Its function is as follows. This protein specifically catalyzes the removal of signal peptides from prolipoproteins. This is Lipoprotein signal peptidase from Photorhabdus laumondii subsp. laumondii (strain DSM 15139 / CIP 105565 / TT01) (Photorhabdus luminescens subsp. laumondii).